A 295-amino-acid chain; its full sequence is Small ribosomal subunit protein uS2 (295 aa).

A disordered region spans residues 260–295 (KQAKKFSKTKNIDEETNTEFEQALNDADENKNSDNA).

Belongs to the universal ribosomal protein uS2 family.

This chain is Small ribosomal subunit protein uS2, found in Rickettsia felis (strain ATCC VR-1525 / URRWXCal2) (Rickettsia azadi).